Here is a 125-residue protein sequence, read N- to C-terminus: uncharacterized protein (125 aa).

This is an uncharacterized protein from Mycoplasma (Bacteriophage L2).